The chain runs to 466 residues: Soluble pyridine nucleotide transhydrogenase (466 aa).

FAD is bound at residue 36–45 (ERYHNVGGGC).

It belongs to the class-I pyridine nucleotide-disulfide oxidoreductase family. FAD is required as a cofactor.

The protein resides in the cytoplasm. The enzyme catalyses NAD(+) + NADPH = NADH + NADP(+). Conversion of NADPH, generated by peripheral catabolic pathways, to NADH, which can enter the respiratory chain for energy generation. This Enterobacter sp. (strain 638) protein is Soluble pyridine nucleotide transhydrogenase.